Here is a 152-residue protein sequence, read N- to C-terminus: SsrA-binding protein (152 aa).

It belongs to the SmpB family.

It is found in the cytoplasm. Its function is as follows. Required for rescue of stalled ribosomes mediated by trans-translation. Binds to transfer-messenger RNA (tmRNA), required for stable association of tmRNA with ribosomes. tmRNA and SmpB together mimic tRNA shape, replacing the anticodon stem-loop with SmpB. tmRNA is encoded by the ssrA gene; the 2 termini fold to resemble tRNA(Ala) and it encodes a 'tag peptide', a short internal open reading frame. During trans-translation Ala-aminoacylated tmRNA acts like a tRNA, entering the A-site of stalled ribosomes, displacing the stalled mRNA. The ribosome then switches to translate the ORF on the tmRNA; the nascent peptide is terminated with the 'tag peptide' encoded by the tmRNA and targeted for degradation. The ribosome is freed to recommence translation, which seems to be the essential function of trans-translation. The chain is SsrA-binding protein from Rickettsia bellii (strain RML369-C).